Here is a 402-residue protein sequence, read N- to C-terminus: MSRVSQARNLGKYFLLIDNMLVVLGFFVVFPLISIRFVDQMGWAAVMVGIALGLRQFIQQGLGIFGGAIADRFGAKPMIVTGMLMRAAGFATMGIAHEPWLLWFSCLLSGLGGTLFDPPRSALVVKLIRPQQRGRFFSLLMMQDSAGAVIGALLGSWLLQYDFRLVCATGAVLFVLCAAFNAWLLPAWKLSTVRTPVREGMTRVMRDKRFVTYVLTLAGYYMLAVQVMLMLPIMVNDVAGAPSAVKWMYAIEACLSLTLLYPIARWSEKHFRLEHRLMAGLLIMSLSMMPVGMVSGLQQLFTLICLFYIGSIIAEPARETLSASLADARARGSYMGCSRLGLAIGGAIGYIGGGWLFDLGKSAHQPELPWMMLGIIGIFTFLALGWQFSQKRAARRLLERDA.

Residues 1–12 (MSRVSQARNLGK) are Cytoplasmic-facing. The helical transmembrane segment at 13-33 (YFLLIDNMLVVLGFFVVFPLI) threads the bilayer. At 34 to 98 (SIRFVDQMGW…GFATMGIAHE (65 aa)) the chain is on the periplasmic side. The helical transmembrane segment at 99–116 (PWLLWFSCLLSGLGGTLF) threads the bilayer. The Cytoplasmic segment spans residues 117–138 (DPPRSALVVKLIRPQQRGRFFS). The helical transmembrane segment at 139 to 159 (LLMMQDSAGAVIGALLGSWLL) threads the bilayer. At 160 to 164 (QYDFR) the chain is on the periplasmic side. Residues 165-185 (LVCATGAVLFVLCAAFNAWLL) form a helical membrane-spanning segment. Residues 186-213 (PAWKLSTVRTPVREGMTRVMRDKRFVTY) are Cytoplasmic-facing. A helical transmembrane segment spans residues 214–234 (VLTLAGYYMLAVQVMLMLPIM). Over 235-243 (VNDVAGAPS) the chain is Periplasmic. A helical membrane pass occupies residues 244 to 264 (AVKWMYAIEACLSLTLLYPIA). The Cytoplasmic portion of the chain corresponds to 265 to 276 (RWSEKHFRLEHR). Residues 277-297 (LMAGLLIMSLSMMPVGMVSGL) traverse the membrane as a helical segment. At 298–299 (QQ) the chain is on the periplasmic side. Residues 300-320 (LFTLICLFYIGSIIAEPARET) traverse the membrane as a helical segment. Residues 321–339 (LSASLADARARGSYMGCSR) lie on the Cytoplasmic side of the membrane. A helical transmembrane segment spans residues 340 to 360 (LGLAIGGAIGYIGGGWLFDLG). Over 361 to 367 (KSAHQPE) the chain is Periplasmic. Residues 368–388 (LPWMMLGIIGIFTFLALGWQF) form a helical membrane-spanning segment. At 389 to 402 (SQKRAARRLLERDA) the chain is on the cytoplasmic side.

Belongs to the major facilitator superfamily. DHA1 family. MdtH (TC 2.A.1.2.21) subfamily.

Its subcellular location is the cell inner membrane. Functionally, confers resistance to norfloxacin and enoxacin. The sequence is that of Multidrug resistance protein MdtH from Escherichia coli (strain SE11).